The following is a 134-amino-acid chain: Estradiol 17-beta-dehydrogenase 8 (134 aa).

Ser38 contributes to the substrate binding site. The residue at position 42 (Lys42) is an N6-succinyllysine. Residue Tyr51 is the Proton acceptor of the active site. Residues 51–55 (YAASK) and 84–86 (IAT) contribute to the NAD(+) site. Lys55 bears the N6-succinyllysine mark.

The protein belongs to the short-chain dehydrogenases/reductases (SDR) family. In terms of assembly, heterotetramer with CBR4; contains two molecules of HSD17B8 and CBR4.

It localises to the mitochondrion matrix. It catalyses the reaction 17beta-estradiol + NAD(+) = estrone + NADH + H(+). The enzyme catalyses 17beta-estradiol + NADP(+) = estrone + NADPH + H(+). The catalysed reaction is testosterone + NAD(+) = androst-4-ene-3,17-dione + NADH + H(+). It functions in the pathway steroid biosynthesis; estrogen biosynthesis. The protein operates within lipid metabolism; fatty acid biosynthesis. In terms of biological role, NAD-dependent 17-beta-hydroxysteroid dehydrogenase with highest activity towards estradiol. Has very low activity towards testosterone. The heterotetramer with CBR4 has NADH-dependent 3-ketoacyl-acyl carrier protein reductase activity, and thereby plays a role in mitochondrial fatty acid biosynthesis. Within the heterotetramer, HSD17B8 binds NADH; CBR4 binds NADPD. In Callithrix jacchus (White-tufted-ear marmoset), this protein is Estradiol 17-beta-dehydrogenase 8 (HSD17B8).